We begin with the raw amino-acid sequence, 145 residues long: Large ribosomal subunit protein bL9 (145 aa).

The protein belongs to the bacterial ribosomal protein bL9 family.

Its function is as follows. Binds to the 23S rRNA. In Mesomycoplasma hyopneumoniae (strain 7448) (Mycoplasma hyopneumoniae), this protein is Large ribosomal subunit protein bL9.